A 157-amino-acid polypeptide reads, in one-letter code: Regenerating islet-derived protein 4 (157 aa).

A signal peptide spans Met1 to Ser22. Cys29 and Cys40 are disulfide-bonded. Residues Tyr36 to Lys154 form the C-type lectin domain. N-linked (GlcNAc...) asparagine glycosylation is found at Asn49, Asn62, and Asn101. 2 cysteine pairs are disulfide-bonded: Cys57-Cys153 and Cys128-Cys145. Residues Asp97 to Asn101 and Lys134 to Lys136 contribute to the a carbohydrate site.

The protein localises to the secreted. Functionally, calcium-independent lectin displaying mannose-binding specificity and able to maintain carbohydrate recognition activity in an acidic environment. May be involved in inflammatory and metaplastic responses of the gastrointestinal epithelium. In Rattus norvegicus (Rat), this protein is Regenerating islet-derived protein 4 (Reg4).